The primary structure comprises 495 residues: MPKKLVPKDYEYIHLDLTTGEINFTSFNSLEELQASLKEGQIFFHKSVIFEEKPESGEIYSPKLISQIYRKEQELFEIREKSKGHPLPVTKKLLKRGQGTIVCCGIYTKELLKNVAEKGQYDTQCDDLNLGIFHVRAHKPLGIAQRLVHLPLPEDASSAAVATENLFGLIRFILVNDPAKKKIYLPISCFAIEKRIEQEHIIGYSQKDSLALSQRAYYEYKKDGTLIGLVALIGVDVKIDGKLGFLYHPVWREKQWALKFNEKMFYCAVSRAEKEKVFKPPYYLEPTAIIVDVTETPVKRLKNTSEDYLWLEVSQISAKFSLFCAQNNLKLEKADSKNKSPFVALSMESISELTGEQKRAFVKILNIPGIIFSSSTLAKARLESKLQYIGPALIEAAADGNFTDVVDIINRIEPLYDYKEILKEALKTQRLGTGNTPLQEAIKGQHTSLVKYFSSLSASLKVINHKNHQGLTALNFATAIGSSPAIVQELEWCSQ.

Residues 224–235 traverse the membrane as a helical segment; the sequence is GTLIGLVALIGV.

It is found in the cell membrane. The chain is Surface E' protein (cbbE') from Coxiella burnetii.